Here is a 434-residue protein sequence, read N- to C-terminus: MESKKFRTPSQSATVIVGTQFGDEGKGKLVDYLSDKYDIVVRYQGGANAGHTICFDNKTVVLHLIPSGIFHKGCVCVIGNGVVIDPAALLDEIRKVEELGYEVTGRLFISHNAHLIMPYHKLLDSLHESAQGDQKIGTTGRGIGPSYEDKFARKGIRVVDLLNPEVLKEKLRENLAAKNKLFKNIYEKEEIDVETMVREYEDFDKIIDPYVTNTQLYLNRQLQEGKTVLLEGAQGCLLDVDHGTYPYVTSSNPTSGGASTGSGIAPNYIGKVIGVCKAYMTRVGNGAFPTELLDETGERLGKIGHEFGATTGRKRRCGWIDLVALRYSLTINGVTEIALTKLDVLDTFEEIRICTSYMLDGKEIHDFPTDHQTLSRVTPLYTTLKGWMASNAHARSFSEMQPEAQNYVTFLEDELQVQVTFISVGPGREETVFR.

GTP contacts are provided by residues Gly-22 to Lys-28 and Gly-50 to Thr-52. Catalysis depends on Asp-23, which acts as the Proton acceptor. The Mg(2+) site is built by Asp-23 and Gly-50. IMP is bound by residues Asp-23–Lys-26, Asn-48–His-51, Thr-139, Arg-153, Gln-234, Thr-249, and Arg-313. Catalysis depends on His-51, which acts as the Proton donor. Position 309–315 (Ala-309–Arg-315) interacts with substrate. Residues Arg-315, Lys-341–Asp-343, and Ser-423–Gly-425 contribute to the GTP site.

It belongs to the adenylosuccinate synthetase family. As to quaternary structure, homodimer. Mg(2+) serves as cofactor.

The protein localises to the cytoplasm. It carries out the reaction IMP + L-aspartate + GTP = N(6)-(1,2-dicarboxyethyl)-AMP + GDP + phosphate + 2 H(+). The protein operates within purine metabolism; AMP biosynthesis via de novo pathway; AMP from IMP: step 1/2. In terms of biological role, plays an important role in the de novo pathway of purine nucleotide biosynthesis. Catalyzes the first committed step in the biosynthesis of AMP from IMP. The chain is Adenylosuccinate synthetase from Pelodictyon phaeoclathratiforme (strain DSM 5477 / BU-1).